The primary structure comprises 401 residues: N-acetyllactosaminide beta-1,6-N-acetylglucosaminyl-transferase (401 aa).

Residues 1 to 7 are Cytoplasmic-facing; it reads MPPSVRY. Residues 8-28 form a helical; Signal-anchor for type II membrane protein membrane-spanning segment; it reads FFIVSVTTVIVFIVLYVLSFG. Residues 29–401 lie on the Lumenal side of the membrane; it reads GDQSYQKLNI…EIAIQPSWYF (373 aa). Asn-37, Asn-255, Asn-315, and Asn-389 each carry an N-linked (GlcNAc...) asparagine glycan.

This sequence belongs to the glycosyltransferase 14 family.

Its subcellular location is the golgi apparatus membrane. The catalysed reaction is a beta-D-Gal-(1-&gt;4)-beta-D-GlcNAc-(1-&gt;3)-beta-D-Gal-(1-&gt;4)-beta-D-GlcNAc derivative + UDP-N-acetyl-alpha-D-glucosamine = a beta-D-Gal-(1-&gt;4)-beta-D-GlcNAc-(1-&gt;3)-[beta-D-GlcNAc-(1-&gt;6)]-beta-D-Gal-(1-&gt;4)-N-acetyl-beta-D-glucosaminyl derivative + UDP + H(+). It participates in protein modification; protein glycosylation. In terms of biological role, branching enzyme that converts linear into branched poly-N-acetyllactosaminoglycans. Introduces the blood group I antigen during embryonic development. It is closely associated with the development and maturation of erythroid cells. This chain is N-acetyllactosaminide beta-1,6-N-acetylglucosaminyl-transferase (Gcnt2), found in Mus musculus (Mouse).